The following is a 62-amino-acid chain: Large ribosomal subunit protein bL28 (62 aa).

It belongs to the bacterial ribosomal protein bL28 family.

This is Large ribosomal subunit protein bL28 from Onion yellows phytoplasma (strain OY-M).